Here is a 297-residue protein sequence, read N- to C-terminus: uncharacterized protein (297 aa).

The disordered stretch occupies residues 1–29 (MAESKAKNMFQKLSLTPKRNHEHDAGRNI). Residues 19-29 (RNHEHDAGRNI) show a composition bias toward basic and acidic residues.

This is an uncharacterized protein from Caenorhabditis elegans.